We begin with the raw amino-acid sequence, 454 residues long: Bifunctional protein GlmU (454 aa).

A pyrophosphorylase region spans residues 1 to 228; sequence MSLKVIILAA…EMEVLGVNNK (228 aa). Residues 8–11, Lys22, Gln73, 78–79, 100–102, Gly138, Glu153, Asn168, and Asn226 contribute to the UDP-N-acetyl-alpha-D-glucosamine site; these read LAAG, GT, and YGD. Mg(2+) is bound at residue Asp102. Residue Asn226 participates in Mg(2+) binding. The interval 229–249 is linker; it reads SQLQSLERQYQAQLAEELMEQ. Positions 250 to 454 are N-acetyltransferase; sequence GVTVLDASRI…IKGWQKPTKN (205 aa). UDP-N-acetyl-alpha-D-glucosamine-binding residues include Arg332 and Lys350. Residue His362 is the Proton acceptor of the active site. UDP-N-acetyl-alpha-D-glucosamine-binding residues include Tyr365 and Asn376. Acetyl-CoA is bound by residues Ala379, 385 to 386, Ser404, Ala422, and Arg439; that span reads NY.

This sequence in the N-terminal section; belongs to the N-acetylglucosamine-1-phosphate uridyltransferase family. It in the C-terminal section; belongs to the transferase hexapeptide repeat family. Homotrimer. The cofactor is Mg(2+).

Its subcellular location is the cytoplasm. The catalysed reaction is alpha-D-glucosamine 1-phosphate + acetyl-CoA = N-acetyl-alpha-D-glucosamine 1-phosphate + CoA + H(+). It catalyses the reaction N-acetyl-alpha-D-glucosamine 1-phosphate + UTP + H(+) = UDP-N-acetyl-alpha-D-glucosamine + diphosphate. It participates in nucleotide-sugar biosynthesis; UDP-N-acetyl-alpha-D-glucosamine biosynthesis; N-acetyl-alpha-D-glucosamine 1-phosphate from alpha-D-glucosamine 6-phosphate (route II): step 2/2. The protein operates within nucleotide-sugar biosynthesis; UDP-N-acetyl-alpha-D-glucosamine biosynthesis; UDP-N-acetyl-alpha-D-glucosamine from N-acetyl-alpha-D-glucosamine 1-phosphate: step 1/1. It functions in the pathway bacterial outer membrane biogenesis; LPS lipid A biosynthesis. Functionally, catalyzes the last two sequential reactions in the de novo biosynthetic pathway for UDP-N-acetylglucosamine (UDP-GlcNAc). The C-terminal domain catalyzes the transfer of acetyl group from acetyl coenzyme A to glucosamine-1-phosphate (GlcN-1-P) to produce N-acetylglucosamine-1-phosphate (GlcNAc-1-P), which is converted into UDP-GlcNAc by the transfer of uridine 5-monophosphate (from uridine 5-triphosphate), a reaction catalyzed by the N-terminal domain. The polypeptide is Bifunctional protein GlmU (Hydrogenovibrio crunogenus (strain DSM 25203 / XCL-2) (Thiomicrospira crunogena)).